Consider the following 82-residue polypeptide: Pigment-dispersing hormone peptides (82 aa).

The signal sequence occupies residues 1–26 (MIGKYLSWFMLAFLFGFVLESYRVQS). At Ala80 the chain carries Alanine amide.

This sequence belongs to the arthropod PDH family. As to expression, expressed strongly in the head and weakly in the ventral nerve cord. Not detected in the midgut cecum or hindgut. In the cephalic neural complex, specifically localized to cells within the optic lobe, anteromedian protocerebrum, accessory lobe, tritocerebrum, and subesophageal ganglion.

It is found in the secreted. In terms of biological role, the pigment-dispersing hormone causes the migration of the distal retinal pigment into the proximal end of the pigment chromatophore cells and thus decreases the amount of light entering the retinulas. May also function as a neurotransmitter and/or neuromodulator. The chain is Pigment-dispersing hormone peptides from Armadillidium vulgare (Pillbug).